The chain runs to 829 residues: Periplasmic nitrate reductase (829 aa).

The segment at residues 1 to 29 (MKMTRRAFVKANAAASAAAVAGVTLPASA) is a signal peptide (tat-type signal). A 4Fe-4S Mo/W bis-MGD-type domain is found at 41 to 97 (IKWDKAPCRFCGTGCSVLVGTQNGRVVATQGDPEAPVNKGLNCIKGYFLSKIMYGKD). C48, C51, C55, and C83 together coordinate [4Fe-4S] cluster. Mo-bis(molybdopterin guanine dinucleotide) contacts are provided by residues K85, Q152, N177, C181, 214 to 221 (WGSNMAEM), 245 to 249 (STYYH), 264 to 266 (QSD), M374, Q378, N484, 510 to 511 (SD), K533, D560, and 718 to 727 (TGRVLEHWHT). Residue F794 participates in substrate binding. N802 and K819 together coordinate Mo-bis(molybdopterin guanine dinucleotide).

It belongs to the prokaryotic molybdopterin-containing oxidoreductase family. NasA/NapA/NarB subfamily. As to quaternary structure, component of the periplasmic nitrate reductase NapAB complex composed of NapA and NapB. [4Fe-4S] cluster serves as cofactor. Requires Mo-bis(molybdopterin guanine dinucleotide) as cofactor. In terms of processing, predicted to be exported by the Tat system. The position of the signal peptide cleavage has not been experimentally proven.

It localises to the periplasm. It catalyses the reaction 2 Fe(II)-[cytochrome] + nitrate + 2 H(+) = 2 Fe(III)-[cytochrome] + nitrite + H2O. Functionally, catalytic subunit of the periplasmic nitrate reductase complex NapAB. Receives electrons from NapB and catalyzes the reduction of nitrate to nitrite. The polypeptide is Periplasmic nitrate reductase (Aliivibrio fischeri (strain ATCC 700601 / ES114) (Vibrio fischeri)).